We begin with the raw amino-acid sequence, 512 residues long: Maturase K (512 aa).

This sequence belongs to the intron maturase 2 family. MatK subfamily.

Its subcellular location is the plastid. It is found in the chloroplast. Usually encoded in the trnK tRNA gene intron. Probably assists in splicing its own and other chloroplast group II introns. The protein is Maturase K of Amorphophallus abyssinicus (Black arum).